Consider the following 345-residue polypeptide: S-adenosylmethionine:tRNA ribosyltransferase-isomerase (345 aa).

Belongs to the QueA family. Monomer.

Its subcellular location is the cytoplasm. The enzyme catalyses 7-aminomethyl-7-carbaguanosine(34) in tRNA + S-adenosyl-L-methionine = epoxyqueuosine(34) in tRNA + adenine + L-methionine + 2 H(+). Its pathway is tRNA modification; tRNA-queuosine biosynthesis. Transfers and isomerizes the ribose moiety from AdoMet to the 7-aminomethyl group of 7-deazaguanine (preQ1-tRNA) to give epoxyqueuosine (oQ-tRNA). The polypeptide is S-adenosylmethionine:tRNA ribosyltransferase-isomerase (Shewanella sp. (strain ANA-3)).